Reading from the N-terminus, the 864-residue chain is N-alpha-acetyltransferase 16, NatA auxiliary subunit (864 aa).

TPR repeat units lie at residues 46–79 (GETLAMKGLILNCLGKREEAYEFVRKGLRSDVRS), 80–113 (HVCWHVYGLLQRSDKKYDEAIKCYRNALKLDKDN), 148–184 (RASWIGYAIAYHLLKDYDTALKLLEEFRQTQQVPPNK), 224–257 (LLVEEIKGEMLLKLGRLKEASEVFRNLIDWNAEN), 374–407 (IWVQYFLAQHYDKLGQYFLALEYINAVIASTPTL), 408–441 (IELFYMKAKIYKHMGNLKEAAQWMDEAQSLDTAD), and 485–514 (MWFETECISAYQRLGRYGDALKKCHEVERH). Residues 594-646 (KMLSKQRRAQKKAKVEEERKHTERERQQKNQKKKREEEEEVTSGHKEELIPEK) are disordered. Residues 595 to 605 (MLSKQRRAQKK) show a composition bias toward basic residues. Basic and acidic residues-rich tracts occupy residues 606–621 (AKVEEERKHTERERQQ) and 635–646 (TSGHKEELIPEK).

Component of the N-terminal acetyltransferase A (NatA) complex composed of NAA10 and NAA16. As to expression, highest levels in the kidney and testes. Moderate expression in the liver, thymus and skin.

Its function is as follows. Auxillary subunit of the N-terminal acetyltransferase A (NatA) complex which displays alpha (N-terminal) acetyltransferase activity. In Mus musculus (Mouse), this protein is N-alpha-acetyltransferase 16, NatA auxiliary subunit (Naa16).